A 309-amino-acid polypeptide reads, in one-letter code: Cell division protein FtsQ (309 aa).

The Cytoplasmic segment spans residues 1-52 (MLALRGRRGKRVRYPADGVAEADEAFVLPRPLRRGVRFLISLGAGRIRFPNH). Residues 53–74 (TGTVAAAAFMVATGLYGMSLGG) form a helical membrane-spanning segment. The Periplasmic portion of the chain corresponds to 75–309 (HTQSFAQVST…KMLKAQEKRI (235 aa)). One can recognise a POTRA domain in the interval 89–157 (FAIEDVRVSG…GTIEVVLKER (69 aa)).

It belongs to the FtsQ/DivIB family. FtsQ subfamily.

The protein resides in the cell inner membrane. Functionally, essential cell division protein. This Rhizobium meliloti (strain 1021) (Ensifer meliloti) protein is Cell division protein FtsQ.